The chain runs to 118 residues: Large ribosomal subunit protein bL20 (118 aa).

The protein belongs to the bacterial ribosomal protein bL20 family.

In terms of biological role, binds directly to 23S ribosomal RNA and is necessary for the in vitro assembly process of the 50S ribosomal subunit. It is not involved in the protein synthesizing functions of that subunit. This chain is Large ribosomal subunit protein bL20, found in Psychrobacter sp. (strain PRwf-1).